Reading from the N-terminus, the 152-residue chain is MTITDLVLILFIAALLAFAIYDQFIMPRRNGPTLLAIPLLRRGRIDSVIFVGLIVILIYNNVTNHGALITTWLLSALALMGFYIFWIRVPKIIFKQKGFFFANVWIEYSRIKAMNLSEDGVLVMQLEQRRLLIRVRNIDDLEKIYKLLVSTQ.

A run of 3 helical transmembrane segments spans residues 6–26 (LVLI…QFIM), 45–65 (IDSV…VTNH), and 67–87 (ALIT…IFWI).

The protein belongs to the UPF0266 family.

It localises to the cell inner membrane. This is UPF0266 membrane protein YobD from Shigella dysenteriae serotype 1 (strain Sd197).